We begin with the raw amino-acid sequence, 1221 residues long: Phosphoenolpyruvate carboxylase 2 (1221 aa).

The active site involves His-156. Disordered stretches follow at residues 443 to 588 (TAAE…DPTF) and 642 to 661 (REPA…GGGG). 2 stretches are compositionally biased toward low complexity: residues 503-513 (TTTATAAAAAA) and 550-564 (PFRE…TAAS). Gly residues-rich tracts occupy residues 565–575 (GGAGGGGGGGA) and 648–661 (AHGG…GGGG). Lys-886 is a catalytic residue.

Belongs to the PEPCase type 1 family. Mg(2+) serves as cofactor.

It localises to the cytoplasm. The catalysed reaction is oxaloacetate + phosphate = phosphoenolpyruvate + hydrogencarbonate. In terms of biological role, through the carboxylation of phosphoenolpyruvate (PEP) it forms oxaloacetate, a four-carbon dicarboxylic acid source for the tricarboxylic acid cycle. The chain is Phosphoenolpyruvate carboxylase 2 from Chlamydomonas reinhardtii (Chlamydomonas smithii).